Consider the following 98-residue polypeptide: Feather keratin 3 (98 aa).

This sequence belongs to the avian keratin family. In terms of assembly, the avian keratins (F-ker, S-ker, C-ker and B-ker) are a complex mixture of very similar polypeptides.

In Gallus gallus (Chicken), this protein is Feather keratin 3.